Consider the following 560-residue polypeptide: DNA ligase B (560 aa).

The active-site N6-AMP-lysine intermediate is Lys124.

The protein belongs to the NAD-dependent DNA ligase family. LigB subfamily.

The enzyme catalyses NAD(+) + (deoxyribonucleotide)n-3'-hydroxyl + 5'-phospho-(deoxyribonucleotide)m = (deoxyribonucleotide)n+m + AMP + beta-nicotinamide D-nucleotide.. In terms of biological role, catalyzes the formation of phosphodiester linkages between 5'-phosphoryl and 3'-hydroxyl groups in double-stranded DNA using NAD as a coenzyme and as the energy source for the reaction. This Shigella sonnei (strain Ss046) protein is DNA ligase B.